The primary structure comprises 42 residues: MAEKRDVLNYLEMVIRSYDIULSCAAHVLDRVKFRIERKDED.

Residues U21 and C24 each contribute to the Ni(2+) site. U21 is a non-standard amino acid (selenocysteine). Residues 28-42 (VLDRVKFRIERKDED) constitute a propeptide, removed in mature form.

It belongs to the [NiFe]/[NiFeSe] hydrogenase large subunit family. In terms of assembly, the F420-non-reducing hydrogenase vhu is composed of four subunits; VhuA, VhuD, VhuG and VhuU. Requires Ni(2+) as cofactor.

The sequence is that of F420-non-reducing hydrogenase vhu subunit U (vhuU) from Methanopyrus kandleri (strain AV19 / DSM 6324 / JCM 9639 / NBRC 100938).